We begin with the raw amino-acid sequence, 340 residues long: tRNA N6-adenosine threonylcarbamoyltransferase (340 aa).

Residues histidine 115 and histidine 119 each contribute to the Fe cation site. Substrate contacts are provided by residues 138–142 (VVSGG), aspartate 171, glycine 184, aspartate 188, and asparagine 278. Aspartate 306 provides a ligand contact to Fe cation.

This sequence belongs to the KAE1 / TsaD family. Fe(2+) serves as cofactor.

The protein localises to the cytoplasm. The enzyme catalyses L-threonylcarbamoyladenylate + adenosine(37) in tRNA = N(6)-L-threonylcarbamoyladenosine(37) in tRNA + AMP + H(+). In terms of biological role, required for the formation of a threonylcarbamoyl group on adenosine at position 37 (t(6)A37) in tRNAs that read codons beginning with adenine. Is involved in the transfer of the threonylcarbamoyl moiety of threonylcarbamoyl-AMP (TC-AMP) to the N6 group of A37, together with TsaE and TsaB. TsaD likely plays a direct catalytic role in this reaction. This is tRNA N6-adenosine threonylcarbamoyltransferase from Clostridium botulinum (strain 657 / Type Ba4).